The chain runs to 334 residues: Glyceraldehyde-3-phosphate dehydrogenase (334 aa).

NAD(+) contacts are provided by residues 12–13 (RI), Asp-37, Arg-81, and Ser-123. Residues 153–155 (SCT) and Thr-184 contribute to the D-glyceraldehyde 3-phosphate site. The Nucleophile role is filled by Cys-154. Residue Asn-185 participates in NAD(+) binding. Residues Arg-199, 212-213 (TG), and Arg-235 each bind D-glyceraldehyde 3-phosphate. Asn-314 contributes to the NAD(+) binding site.

Belongs to the glyceraldehyde-3-phosphate dehydrogenase family. As to quaternary structure, homotetramer.

The protein localises to the cytoplasm. It catalyses the reaction D-glyceraldehyde 3-phosphate + phosphate + NAD(+) = (2R)-3-phospho-glyceroyl phosphate + NADH + H(+). It participates in carbohydrate degradation; glycolysis; pyruvate from D-glyceraldehyde 3-phosphate: step 1/5. Catalyzes the oxidative phosphorylation of glyceraldehyde 3-phosphate (G3P) to 1,3-bisphosphoglycerate (BPG) using the cofactor NAD. The first reaction step involves the formation of a hemiacetal intermediate between G3P and a cysteine residue, and this hemiacetal intermediate is then oxidized to a thioester, with concomitant reduction of NAD to NADH. The reduced NADH is then exchanged with the second NAD, and the thioester is attacked by a nucleophilic inorganic phosphate to produce BPG. This is Glyceraldehyde-3-phosphate dehydrogenase (gap) from Pseudomonas aeruginosa (strain ATCC 15692 / DSM 22644 / CIP 104116 / JCM 14847 / LMG 12228 / 1C / PRS 101 / PAO1).